The primary structure comprises 444 residues: Methylenetetrahydrofolate--tRNA-(uracil-5-)-methyltransferase TrmFO (444 aa).

10–15 provides a ligand contact to FAD; the sequence is GAGLAG.

This sequence belongs to the MnmG family. TrmFO subfamily. The cofactor is FAD.

It localises to the cytoplasm. It catalyses the reaction uridine(54) in tRNA + (6R)-5,10-methylene-5,6,7,8-tetrahydrofolate + NADH + H(+) = 5-methyluridine(54) in tRNA + (6S)-5,6,7,8-tetrahydrofolate + NAD(+). The enzyme catalyses uridine(54) in tRNA + (6R)-5,10-methylene-5,6,7,8-tetrahydrofolate + NADPH + H(+) = 5-methyluridine(54) in tRNA + (6S)-5,6,7,8-tetrahydrofolate + NADP(+). Catalyzes the folate-dependent formation of 5-methyl-uridine at position 54 (M-5-U54) in all tRNAs. The chain is Methylenetetrahydrofolate--tRNA-(uracil-5-)-methyltransferase TrmFO from Streptococcus agalactiae serotype Ia (strain ATCC 27591 / A909 / CDC SS700).